A 426-amino-acid polypeptide reads, in one-letter code: Glutamate-1-semialdehyde 2,1-aminomutase (426 aa).

Lys-265 is subject to N6-(pyridoxal phosphate)lysine.

It belongs to the class-III pyridoxal-phosphate-dependent aminotransferase family. HemL subfamily. Homodimer. Pyridoxal 5'-phosphate serves as cofactor.

Its subcellular location is the cytoplasm. The catalysed reaction is (S)-4-amino-5-oxopentanoate = 5-aminolevulinate. Its pathway is porphyrin-containing compound metabolism; protoporphyrin-IX biosynthesis; 5-aminolevulinate from L-glutamyl-tRNA(Glu): step 2/2. In Escherichia coli (strain SMS-3-5 / SECEC), this protein is Glutamate-1-semialdehyde 2,1-aminomutase.